A 524-amino-acid polypeptide reads, in one-letter code: Probable inorganic phosphate transporter 1-2 (524 aa).

Residues 1–24 (MAEQQLGVLKALDVAKTQLYHFTA) lie on the Cytoplasmic side of the membrane. A helical transmembrane segment spans residues 25–45 (IVIAGMGFFTDAYDLFCVSLV). Residues 46–70 (TKLLGRIYYFNPESAKPGSLPPHVA) are Extracellular-facing. Residues 71–91 (AAVNGVALCGTLSGQLFFGWL) form a helical membrane-spanning segment. Topologically, residues 92–99 (GDKLGRKK) are cytoplasmic. The helical transmembrane segment at 100–120 (VYGLTLIMMILCSVASGLSFG) threads the bilayer. The Extracellular portion of the chain corresponds to 121 to 131 (NEAKGVMTTLC). Residues 132–152 (FFRFWLGFGIGGDYPLSATIM) traverse the membrane as a helical segment. Topologically, residues 153 to 161 (SEYANKKTR) are cytoplasmic. Residues 162–182 (GAFIAAVFAMQGVGILAGGFV) form a helical membrane-spanning segment. The Extracellular segment spans residues 183 to 211 (ALAVSSIFDKKFPAPTYAVNRALSTPPQV). A helical membrane pass occupies residues 212 to 232 (DYIWRIIVMFGALPAALTYYW). Residues 233-292 (RMKMPETARYTALVAKNIKQATADMSKVLQTDIELEERVEDDVKDPRQNYGLFSKEFLRR) lie on the Cytoplasmic side of the membrane. Residues 293–313 (HGLHLLGTTSTWFLLDIAFYS) form a helical membrane-spanning segment. Topologically, residues 314–348 (QNLFQKDIFSAIGWIPKAATMNATHEVFRIARAQT) are extracellular. The chain crosses the membrane as a helical span at residues 349-369 (LIALCSTVPGYWFTVAFIDTI). Over 370 to 371 (GR) the chain is Cytoplasmic. A helical transmembrane segment spans residues 372–392 (FKIQLNGFFMMTVFMFAIAFP). The Extracellular portion of the chain corresponds to 393-402 (YNHWIKPENR). A helical transmembrane segment spans residues 403 to 423 (IGFVVMYSLTFFFANFGPNAT). Residues 424–441 (TFIVPAEIFPARLRSTCH) are Cytoplasmic-facing. The chain crosses the membrane as a helical span at residues 442–462 (GISAAAGKAGAIIGAFGFLYA). The Extracellular portion of the chain corresponds to 463–484 (AQNQDKAKVDAGYPPGIGVKNS). The chain crosses the membrane as a helical span at residues 485–505 (LIVLGVLNFIGMLFTFLVPEP). Residues 506–524 (KGKSLEELSGEAEVSHDEK) are Cytoplasmic-facing.

It belongs to the major facilitator superfamily. Phosphate:H(+) symporter (TC 2.A.1.9) family. As to expression, root specific, especially in trichoblasts. In mature plants, localized in root cortical cells and young lateral roots.

It is found in the membrane. In terms of biological role, high-affinity transporter for external inorganic phosphate. This chain is Probable inorganic phosphate transporter 1-2 (PHT1-2), found in Arabidopsis thaliana (Mouse-ear cress).